Here is a 194-residue protein sequence, read N- to C-terminus: Thioredoxin O1, mitochondrial (194 aa).

The N-terminal 42 residues, 1–42 (MKGNWSIVRKVLHRQFSTLRSSTPSSRLSTSIRPLVLAPNSI), are a transit peptide targeting the mitochondrion. Ser75 is subject to Phosphoserine. The Thioredoxin domain maps to 89-194 (VKSEEEFINA…LKNLMEQLYK (106 aa)). Catalysis depends on nucleophile residues Cys118 and Cys121. Cysteines 118 and 121 form a disulfide.

This sequence belongs to the thioredoxin family. Plant O-type subfamily.

It localises to the mitochondrion matrix. Functionally, thiol-disulfide oxidoreductase that may participate in various redox reactions. Possesses insulin disulfide bonds reducing activity. Reduced by thioredoxin reductases NTRA and NTRB. The chain is Thioredoxin O1, mitochondrial from Arabidopsis thaliana (Mouse-ear cress).